Reading from the N-terminus, the 96-residue chain is Evasin P1100 (96 aa).

The first 28 residues, 1 to 28 (MAFNVITFLQFSVFVVILFNINLHSASA), serve as a signal peptide directing secretion. 3 disulfide bridges follow: Cys48–Cys67, Cys52–Cys69, and Cys63–Cys80. An N-linked (GlcNAc...) asparagine glycan is attached at Asn51. Residue Asn74 is glycosylated (N-linked (GlcNAc...) asparagine).

The protein resides in the secreted. Salivary chemokine-binding protein which binds to host chemokines CXCL1, CXCL2, CXCL3, CXCL5, CXCL6, CXCL10, CXCL11 and CXCL13. The sequence is that of Evasin P1100 from Ixodes ricinus (Common tick).